The primary structure comprises 650 residues: Acetyl-coenzyme A synthetase (650 aa).

Residues arginine 191–arginine 194, threonine 311, and asparagine 335 contribute to the CoA site. Residues glycine 387 to proline 389, aspartate 411 to threonine 416, aspartate 501, and arginine 516 contribute to the ATP site. CoA is bound at residue serine 524. Arginine 527 lines the ATP pocket. Mg(2+) contacts are provided by valine 538, histidine 540, and isoleucine 543. Arginine 585 provides a ligand contact to CoA. Lysine 610 carries the post-translational modification N6-acetyllysine.

Belongs to the ATP-dependent AMP-binding enzyme family. Requires Mg(2+) as cofactor. Post-translationally, acetylated. Deacetylation by the SIR2-homolog deacetylase activates the enzyme.

The catalysed reaction is acetate + ATP + CoA = acetyl-CoA + AMP + diphosphate. Catalyzes the conversion of acetate into acetyl-CoA (AcCoA), an essential intermediate at the junction of anabolic and catabolic pathways. AcsA undergoes a two-step reaction. In the first half reaction, AcsA combines acetate with ATP to form acetyl-adenylate (AcAMP) intermediate. In the second half reaction, it can then transfer the acetyl group from AcAMP to the sulfhydryl group of CoA, forming the product AcCoA. The sequence is that of Acetyl-coenzyme A synthetase from Vibrio vulnificus (strain CMCP6).